We begin with the raw amino-acid sequence, 197 residues long: Nucleoside triphosphate pyrophosphatase (197 aa).

Catalysis depends on Asp71, which acts as the Proton acceptor.

This sequence belongs to the Maf family. It depends on a divalent metal cation as a cofactor.

It is found in the cytoplasm. The catalysed reaction is a ribonucleoside 5'-triphosphate + H2O = a ribonucleoside 5'-phosphate + diphosphate + H(+). The enzyme catalyses a 2'-deoxyribonucleoside 5'-triphosphate + H2O = a 2'-deoxyribonucleoside 5'-phosphate + diphosphate + H(+). In terms of biological role, nucleoside triphosphate pyrophosphatase. May have a dual role in cell division arrest and in preventing the incorporation of modified nucleotides into cellular nucleic acids. The sequence is that of Nucleoside triphosphate pyrophosphatase from Synechococcus sp. (strain JA-2-3B'a(2-13)) (Cyanobacteria bacterium Yellowstone B-Prime).